Consider the following 221-residue polypeptide: Arginine ABC transporter permease protein ArtQ (221 aa).

One can recognise an ABC transmembrane type-1 domain in the interval 13–206; the sequence is ALMTLGLAVC…AVTLISQVGI (194 aa). Transmembrane regions (helical) follow at residues 17 to 37, 49 to 69, 82 to 102, 121 to 141, and 186 to 206; these read LGLA…FAVL, VFVA…VYFG, IEFG…AAYA, GAAL…PQVW, and TWYG…QVGI.

The protein belongs to the binding-protein-dependent transport system permease family. HisMQ subfamily. The complex is composed of two ATP-binding proteins (ArtP), two transmembrane proteins (ArtM and ArtQ) and a solute-binding protein (ArtI).

It localises to the cell inner membrane. In terms of biological role, part of the ABC transporter complex ArtPIQM involved in arginine transport. Probably responsible for the translocation of the substrate across the membrane. This is Arginine ABC transporter permease protein ArtQ (artQ) from Haemophilus influenzae (strain ATCC 51907 / DSM 11121 / KW20 / Rd).